A 258-amino-acid polypeptide reads, in one-letter code: Phosphoprotein ECPP44 (258 aa).

Disordered stretches follow at residues 1 to 25 (MASDDSVPQHSVEKTTEYESSDRGL), 46 to 131 (EKVQ…PVEV), and 148 to 175 (KLPGGGKKVEEETVAPPPPPAAAPVDCA). Composition is skewed to basic and acidic residues over residues 11 to 25 (SVEKTTEYESSDRGL), 46 to 80 (EKVQVSEPEPKYEDCKVVEEEEEKAAKPSLLEKLH), 109 to 124 (GLKEKIEEKIHHKEED), and 148 to 158 (KLPGGGKKVEE).

This sequence belongs to the plant dehydrin family. Post-translationally, phosphorylated in embryogenic and somatic embryos. Not phosphorylated in non-embryogenic cells.

Its function is as follows. Phosphorylation of ECCP44 protein is thought to be involved in the acquisition of embryogenic competence. Unlike other dehydrins, it is not thought to function as an environmental stress tolerant. This Daucus carota (Wild carrot) protein is Phosphoprotein ECPP44 (ECPP44).